A 487-amino-acid polypeptide reads, in one-letter code: N-succinylglutamate 5-semialdehyde dehydrogenase (487 aa).

An NAD(+)-binding site is contributed by 221–226; the sequence is GSSDTG. Active-site residues include glutamate 244 and cysteine 278.

Belongs to the aldehyde dehydrogenase family. AstD subfamily.

It catalyses the reaction N-succinyl-L-glutamate 5-semialdehyde + NAD(+) + H2O = N-succinyl-L-glutamate + NADH + 2 H(+). It functions in the pathway amino-acid degradation; L-arginine degradation via AST pathway; L-glutamate and succinate from L-arginine: step 4/5. Functionally, catalyzes the NAD-dependent reduction of succinylglutamate semialdehyde into succinylglutamate. The sequence is that of N-succinylglutamate 5-semialdehyde dehydrogenase from Paraburkholderia xenovorans (strain LB400).